We begin with the raw amino-acid sequence, 617 residues long: Membrane protein insertase YidC (617 aa).

Residues 8–28 (MFVAIGLSLLVLLGWQYFVAG) form a helical membrane-spanning segment. The span at 36–49 (QIEAQNKAAQQQPP) shows a compositional bias: polar residues. Positions 36-91 (QIEAQNKAAQQQPPGVTPDGVPSPSPKEGGPAAPAPGTLPTAQGGPVSREAALARS) are disordered. A compositionally biased stretch (low complexity) spans 61 to 81 (PKEGGPAAPAPGTLPTAQGGP). Helical transmembrane passes span 387–407 (LFGN…LLFL), 461–481 (WPVL…FITI), 517–533 (FVHL…TMFV), and 549–569 (IFTF…AGLV).

The protein belongs to the OXA1/ALB3/YidC family. Type 1 subfamily. As to quaternary structure, interacts with the Sec translocase complex via SecD. Specifically interacts with transmembrane segments of nascent integral membrane proteins during membrane integration.

The protein resides in the cell inner membrane. Functionally, required for the insertion and/or proper folding and/or complex formation of integral membrane proteins into the membrane. Involved in integration of membrane proteins that insert both dependently and independently of the Sec translocase complex, as well as at least some lipoproteins. Aids folding of multispanning membrane proteins. The sequence is that of Membrane protein insertase YidC from Methylobacterium radiotolerans (strain ATCC 27329 / DSM 1819 / JCM 2831 / NBRC 15690 / NCIMB 10815 / 0-1).